The primary structure comprises 125 residues: Small ribosomal subunit protein uS12 (125 aa).

Residue aspartate 89 is modified to 3-methylthioaspartic acid. The interval glycine 106–alanine 125 is disordered. Basic residues predominate over residues serine 113–alanine 125.

Belongs to the universal ribosomal protein uS12 family. In terms of assembly, part of the 30S ribosomal subunit. Contacts proteins S8 and S17. May interact with IF1 in the 30S initiation complex.

Its function is as follows. With S4 and S5 plays an important role in translational accuracy. In terms of biological role, interacts with and stabilizes bases of the 16S rRNA that are involved in tRNA selection in the A site and with the mRNA backbone. Located at the interface of the 30S and 50S subunits, it traverses the body of the 30S subunit contacting proteins on the other side and probably holding the rRNA structure together. The combined cluster of proteins S8, S12 and S17 appears to hold together the shoulder and platform of the 30S subunit. This chain is Small ribosomal subunit protein uS12, found in Aromatoleum aromaticum (strain DSM 19018 / LMG 30748 / EbN1) (Azoarcus sp. (strain EbN1)).